We begin with the raw amino-acid sequence, 427 residues long: Lupus La protein homolog B (427 aa).

The 93-residue stretch at 6–98 folds into the HTH La-type RNA-binding domain; sequence DKEQLDLDTK…RRSPAKPLPE (93 aa). The RRM domain maps to 110–202; it reads RSVYIKGFPT…EERKLNKSEE (93 aa). 2 disordered regions span residues 193–220 and 319–427; these read EERK…AEDA and EGKQ…VGDQ. The region spanning 226 to 348 is the xRRM domain; sequence EERVGCLLKF…KGRGGKGNDS (123 aa). The short motif at 315–331 is the Nuclear localization signal element; sequence KKIMEGKQESFNKRKGR. Composition is skewed to basic residues over residues 327–342 and 351–360; these read KRKG…KGRG and RKKIQFQGKK. The span at 365-376 shows a compositional bias: acidic residues; that stretch reads SSDDEDDMEESE. Residues 405-427 are compositionally biased toward basic and acidic residues; the sequence is RALDDKAEDGPAVKQSKTEVGDQ.

Phosphorylated.

The protein localises to the nucleus. Its function is as follows. La protein plays a role in the transcription of RNA polymerase III. It is most probably a transcription termination factor. Binds to the 3' termini of virtually all nascent polymerase III transcripts. This chain is Lupus La protein homolog B (ssb-b), found in Xenopus laevis (African clawed frog).